A 310-amino-acid chain; its full sequence is Aspartate carbamoyltransferase catalytic subunit (310 aa).

Carbamoyl phosphate contacts are provided by Arg-58 and Thr-59. Lys-86 lines the L-aspartate pocket. Residues Arg-108, His-136, and Gln-139 each contribute to the carbamoyl phosphate site. Residues Arg-169 and Arg-222 each coordinate L-aspartate. The carbamoyl phosphate site is built by Gly-264 and Pro-265.

Belongs to the aspartate/ornithine carbamoyltransferase superfamily. ATCase family. Heterododecamer (2C3:3R2) of six catalytic PyrB chains organized as two trimers (C3), and six regulatory PyrI chains organized as three dimers (R2).

The catalysed reaction is carbamoyl phosphate + L-aspartate = N-carbamoyl-L-aspartate + phosphate + H(+). It functions in the pathway pyrimidine metabolism; UMP biosynthesis via de novo pathway; (S)-dihydroorotate from bicarbonate: step 2/3. Its function is as follows. Catalyzes the condensation of carbamoyl phosphate and aspartate to form carbamoyl aspartate and inorganic phosphate, the committed step in the de novo pyrimidine nucleotide biosynthesis pathway. In Campylobacter fetus subsp. fetus (strain 82-40), this protein is Aspartate carbamoyltransferase catalytic subunit.